We begin with the raw amino-acid sequence, 172 residues long: Protein-export protein SecB (172 aa).

The protein belongs to the SecB family. As to quaternary structure, homotetramer, a dimer of dimers. One homotetramer interacts with 1 SecA dimer.

Its subcellular location is the cytoplasm. One of the proteins required for the normal export of preproteins out of the cell cytoplasm. It is a molecular chaperone that binds to a subset of precursor proteins, maintaining them in a translocation-competent state. It also specifically binds to its receptor SecA. The polypeptide is Protein-export protein SecB (Bordetella avium (strain 197N)).